The sequence spans 318 residues: tRNA-dihydrouridine(16) synthase (318 aa).

FMN is bound by residues 7–9 (PME) and Gln-68. Residue Cys-98 is the Proton donor of the active site. FMN-binding positions include Lys-139, 200–202 (NGE), and 224–225 (CR).

The protein belongs to the Dus family. DusC subfamily. FMN serves as cofactor.

The catalysed reaction is 5,6-dihydrouridine(16) in tRNA + NADP(+) = uridine(16) in tRNA + NADPH + H(+). It catalyses the reaction 5,6-dihydrouridine(16) in tRNA + NAD(+) = uridine(16) in tRNA + NADH + H(+). Catalyzes the synthesis of 5,6-dihydrouridine (D), a modified base found in the D-loop of most tRNAs, via the reduction of the C5-C6 double bond in target uridines. Specifically modifies U16 in tRNAs. This is tRNA-dihydrouridine(16) synthase from Vibrio vulnificus (strain CMCP6).